The chain runs to 269 residues: Dihydropteroate synthase (269 aa).

One can recognise a Pterin-binding domain in the interval 14-261 (TYIMGILNFT…DVLENSRAAK (248 aa)). Asn-21 contributes to the Mg(2+) binding site. (7,8-dihydropterin-6-yl)methyl diphosphate-binding positions include Thr-61, Asp-95, Asn-114, Asp-178, Lys-214, and 249 to 251 (RVH).

This sequence belongs to the DHPS family. Requires Mg(2+) as cofactor.

The catalysed reaction is (7,8-dihydropterin-6-yl)methyl diphosphate + 4-aminobenzoate = 7,8-dihydropteroate + diphosphate. The protein operates within cofactor biosynthesis; tetrahydrofolate biosynthesis; 7,8-dihydrofolate from 2-amino-4-hydroxy-6-hydroxymethyl-7,8-dihydropteridine diphosphate and 4-aminobenzoate: step 1/2. Functionally, catalyzes the condensation of para-aminobenzoate (pABA) with 6-hydroxymethyl-7,8-dihydropterin diphosphate (DHPt-PP) to form 7,8-dihydropteroate (H2Pte), the immediate precursor of folate derivatives. This Clostridium beijerinckii (strain ATCC 51743 / NCIMB 8052) (Clostridium acetobutylicum) protein is Dihydropteroate synthase.